We begin with the raw amino-acid sequence, 59 residues long: MAEVRVGKNESLDSALRRFKRSCQKAGLMAEMRKREHYEKPSVRRKKKAQARNKKKRYA.

The tract at residues 27 to 59 (GLMAEMRKREHYEKPSVRRKKKAQARNKKKRYA) is disordered. A compositionally biased stretch (basic and acidic residues) spans 31–42 (EMRKREHYEKPS). The segment covering 43-59 (VRRKKKAQARNKKKRYA) has biased composition (basic residues).

The protein belongs to the bacterial ribosomal protein bS21 family.

The chain is Small ribosomal subunit protein bS21 from Carboxydothermus hydrogenoformans (strain ATCC BAA-161 / DSM 6008 / Z-2901).